The sequence spans 270 residues: Putative phosphoenolpyruvate synthase regulatory protein (270 aa).

Residue glycine 150–threonine 157 participates in ADP binding.

It belongs to the pyruvate, phosphate/water dikinase regulatory protein family. PSRP subfamily.

It carries out the reaction [pyruvate, water dikinase] + ADP = [pyruvate, water dikinase]-phosphate + AMP + H(+). The enzyme catalyses [pyruvate, water dikinase]-phosphate + phosphate + H(+) = [pyruvate, water dikinase] + diphosphate. In terms of biological role, bifunctional serine/threonine kinase and phosphorylase involved in the regulation of the phosphoenolpyruvate synthase (PEPS) by catalyzing its phosphorylation/dephosphorylation. The sequence is that of Putative phosphoenolpyruvate synthase regulatory protein from Shewanella halifaxensis (strain HAW-EB4).